The following is a 233-amino-acid chain: Phycoerythrobilin synthase (233 aa).

It belongs to the HY2 family.

The enzyme catalyses (3Z)-phycoerythrobilin + 2 oxidized 2[4Fe-4S]-[ferredoxin] = biliverdin IXalpha + 2 reduced 2[4Fe-4S]-[ferredoxin] + 4 H(+). In terms of biological role, plays a role in phycoerythrobilin biosynthesis, the red pigment chromophore photosynthetically active biliproteins of the host cyanobacteria. Uses a four-electron reduction to carry out the reactions catalyzed by two enzymes (EC 1.3.7.2 and EC 1.3.7.3) in host. This chain is Phycoerythrobilin synthase (pebS), found in Prochlorococcus.